Consider the following 83-residue polypeptide: UPF0147 protein TK2131 (83 aa).

It belongs to the UPF0147 family.

The protein is UPF0147 protein TK2131 of Thermococcus kodakarensis (strain ATCC BAA-918 / JCM 12380 / KOD1) (Pyrococcus kodakaraensis (strain KOD1)).